An 89-amino-acid polypeptide reads, in one-letter code: Large ribosomal subunit protein bL27 (89 aa).

The tract at residues 1–23 (MAHKKAGGSSRNGRDSESKRLGV) is disordered.

Belongs to the bacterial ribosomal protein bL27 family.

This Rhizobium meliloti (strain 1021) (Ensifer meliloti) protein is Large ribosomal subunit protein bL27.